We begin with the raw amino-acid sequence, 125 residues long: S-adenosylmethionine decarboxylase proenzyme (125 aa).

The active-site Schiff-base intermediate with substrate; via pyruvic acid is S71. S71 is modified (pyruvic acid (Ser); by autocatalysis). H76 acts as the Proton acceptor; for processing activity in catalysis. C91 (proton donor; for catalytic activity) is an active-site residue.

This sequence belongs to the prokaryotic AdoMetDC family. Type 1 subfamily. Heterotetramer of two alpha and two beta chains arranged as a dimer of alpha/beta heterodimers. Pyruvate is required as a cofactor. In terms of processing, is synthesized initially as an inactive proenzyme. Formation of the active enzyme involves a self-maturation process in which the active site pyruvoyl group is generated from an internal serine residue via an autocatalytic post-translational modification. Two non-identical subunits are generated from the proenzyme in this reaction, and the pyruvate is formed at the N-terminus of the alpha chain, which is derived from the carboxyl end of the proenzyme. The post-translation cleavage follows an unusual pathway, termed non-hydrolytic serinolysis, in which the side chain hydroxyl group of the serine supplies its oxygen atom to form the C-terminus of the beta chain, while the remainder of the serine residue undergoes an oxidative deamination to produce ammonia and the pyruvoyl group blocking the N-terminus of the alpha chain.

It catalyses the reaction S-adenosyl-L-methionine + H(+) = S-adenosyl 3-(methylsulfanyl)propylamine + CO2. Its pathway is amine and polyamine biosynthesis; S-adenosylmethioninamine biosynthesis; S-adenosylmethioninamine from S-adenosyl-L-methionine: step 1/1. Its function is as follows. Catalyzes the decarboxylation of S-adenosylmethionine to S-adenosylmethioninamine (dcAdoMet), the propylamine donor required for the synthesis of the polyamines spermine and spermidine from the diamine putrescine. The sequence is that of S-adenosylmethionine decarboxylase proenzyme from Pyrobaculum islandicum (strain DSM 4184 / JCM 9189 / GEO3).